The chain runs to 62 residues: MPEEDVVDQKRYFEESCKPKCVKPLLEYQACVKRIQDDESGHKHCTGQYFDYWHCVDKCVSV.

Cystine bridges form between Cys-17–Cys-59 and Cys-31–Cys-45.

It belongs to the UQCRH/QCR6 family. As to quaternary structure, component of the ubiquinol-cytochrome c oxidoreductase (cytochrome b-c1 complex, complex III, CIII), a multisubunit enzyme composed of 10 subunits. The complex is composed of 3 respiratory subunits cytochrome b (MT-CYB), cytochrome c1 (CYC1-1 or CYC1-2) and Rieske protein (UCR1-1 or UCR1-2), 2 core protein subunits MPPalpha1 (or MPPalpha2) and MPPB, and 5 low-molecular weight protein subunits QCR7-1 (or QCR7-2), UCRQ-1 (or UCRQ-2), QCR9, UCRY and probably QCR6-1 (or QCR6-2). The complex exists as an obligatory dimer and forms supercomplexes (SCs) in the inner mitochondrial membrane with NADH-ubiquinone oxidoreductase (complex I, CI), resulting in different assemblies (supercomplexes SCI(1)III(2) and SCI(2)III(4)).

It localises to the mitochondrion inner membrane. In terms of biological role, component of the ubiquinol-cytochrome c oxidoreductase, a multisubunit transmembrane complex that is part of the mitochondrial electron transport chain which drives oxidative phosphorylation. The respiratory chain contains 3 multisubunit complexes succinate dehydrogenase (complex II, CII), ubiquinol-cytochrome c oxidoreductase (cytochrome b-c1 complex, complex III, CIII) and cytochrome c oxidase (complex IV, CIV), that cooperate to transfer electrons derived from NADH and succinate to molecular oxygen, creating an electrochemical gradient over the inner membrane that drives transmembrane transport and the ATP synthase. The cytochrome b-c1 complex catalyzes electron transfer from ubiquinol to cytochrome c, linking this redox reaction to translocation of protons across the mitochondrial inner membrane, with protons being carried across the membrane as hydrogens on the quinol. In the process called Q cycle, 2 protons are consumed from the matrix, 4 protons are released into the intermembrane space and 2 electrons are passed to cytochrome c. This is Cytochrome b-c1 complex subunit 6-2, mitochondrial (QCR6-2) from Arabidopsis thaliana (Mouse-ear cress).